The primary structure comprises 86 residues: Large ribosomal subunit protein eL43 (86 aa).

The segment at 38–59 (CPVCGRKAVRRISTGIWQCQKC) adopts a C4-type zinc-finger fold.

The protein belongs to the eukaryotic ribosomal protein eL43 family. Zn(2+) serves as cofactor.

This chain is Large ribosomal subunit protein eL43, found in Thermococcus gammatolerans (strain DSM 15229 / JCM 11827 / EJ3).